Reading from the N-terminus, the 232-residue chain is Putative homeobox protein NANOG2 (232 aa).

A compositionally biased stretch (basic and acidic residues) spans 1–10; sequence MDLPIEDSHD. The disordered stretch occupies residues 1-39; the sequence is MDLPIEDSHDSSTSPKGKQPTTAEKSATKKEDKVPVKKQ. Over residues 11–25 the composition is skewed to polar residues; sequence SSTSPKGKQPTTAEK. The span at 26–35 shows a compositional bias: basic and acidic residues; that stretch reads SATKKEDKVP. 8 tandem repeats follow at residues 123-127, 128-132, 133-137, 143-147, 148-152, 153-157, 158-162, and 163-167. The segment at 123–167 is 8 X repeats starting with a Trp in each unit; it reads WSNQTWNNSIWSNETQNIQSWSNHSWNTQTWCTQSWNNQAWNSPF. Positions 123–167 are sufficient for transactivation activity; it reads WSNQTWNNSIWSNETQNIQSWSNHSWNTQTWCTQSWNNQAWNSPF. Residues 168–232 are sufficient for strong transactivation activity; it reads YNCGEESLQS…YSTNMQPEDV (65 aa).

The protein belongs to the Nanog homeobox family.

It localises to the nucleus. Probable transcriptional regulator. In Pan troglodytes (Chimpanzee), this protein is Putative homeobox protein NANOG2 (NANOGP1).